The chain runs to 396 residues: MTINPVSRKVAWLRVVTLAIAAFIFNTTEFVPVGLLSDIAESFHMQTAQVGIMLTIYAWVVAVMSLPFMLLTSQMERRKLLICLFVLFIASHVLSFLAWNFTVLVISRIGIAFAHAIFWSITASLAIRLAPAGKRAQALSLIATGTALAMVLGLPIGRVVGQYFGWRTTFFAIGMGALITLLCLIKLLPKLPSEHSGSLKSLPLLFRRPALMSLYVLTVVVVTAHYTAYSYIEPFVQNVAGLSANFATVLLLILGGAGIIGSLVFGKLGNRHASSLVSIAIALLVICLLLLLPAANSEAHLAILSIFWGIAIMVIGLGMQVKVLALAPDATDVAMALFSGIFNIGIGAGALVGNQVSLHWSMSAIGYIGAIPACAALVWAVLIFRKWPVTLEEQPH.

Helical transmembrane passes span 15–35 (VVTL…PVGL), 50–70 (VGIM…PFML), 81–101 (LICL…AWNF), 103–123 (VLVI…SITA), 136–156 (AQAL…GLPI), 169–189 (TFFA…KLLP), 209–229 (PALM…YTAY), 246–266 (FATV…LVFG), 275–295 (SLVS…LPAA), 301–321 (LAIL…GMQV), 333–353 (VAMA…ALVG), and 364–384 (AIGY…VLIF).

It belongs to the major facilitator superfamily. SotB (TC 2.A.1.2) family.

The protein localises to the cell inner membrane. Its function is as follows. Involved in the efflux of sugars. The physiological role may be the reduction of the intracellular concentration of toxic sugars or sugar metabolites. This Salmonella schwarzengrund (strain CVM19633) protein is Probable sugar efflux transporter.